The primary structure comprises 765 residues: MPRSPGTRLKPAKYIPVATAAALLVGSSTLFFVFTCPWLTRAVSPAVPVYNGIIFLFVLANFSMATFMDPGVFPRADEDEDKEDDFRAPLYKNVDVRGIQVRMKWCATCHFYRPPRCSHCSVCDNCVEDFDHHCPWVNNCIGRRNYRYFFLFLLSLSAHMVGVVAFGLVYVLNHAEGLGAAHTTITMAVMCVAGLFFIPVIGLTGFHVVLVTRGRTTNEHVTGKFRGGVNPFTRGCYGNVEHVLCSPLAPRYVVEPPRLPLAARLKPPFLRPELLERAAPLKVKLSDNGLKAGLGRSKSKGSLDRLDEKPLDLGPPLPPKAEAGTFGGDLQTPRPSSAESALSAQRTSPPTPAMYKFRPAFPSGPKAPFCGPGEQVPGPDSLTLGEDSIHSLDFASEPSLDLPDYTPGGLHAAYPPSPPLSAADTFSGALRSLSLKAAGRRGGDHVALQPLRSEGGPPTPHRGIFAPHALPNRNGSLSYDSLLNPGSPGGHTCPAHPSAGVASYRSPYLHPGAVGEPPRPPPRSFSPVLGPRPREPSPVRYDNLSRTIMASIQERKDREERERLLRSQADSLFGDSGVYDAPSSYSLQQASALADGARGPALRYGSRDDLVAGPGFGGARNPALQTSVSSLSSAVSRAPRTSSSSLQADLANNNAPGPRPGSGSHRSPVRQGPPSPPSTPRSPSYAGPKAVAFIHTDLPESPPSLAVQRDHPQLKTPPSKLNGQSPGLARLGPAAGPPGPSASPARHTLVKKVSGVGGTTYEISV.

The Cytoplasmic segment spans residues 1–13 (MPRSPGTRLKPAK). A helical membrane pass occupies residues 14-34 (YIPVATAAALLVGSSTLFFVF). Over 35–52 (TCPWLTRAVSPAVPVYNG) the chain is Lumenal. A helical membrane pass occupies residues 53 to 73 (IIFLFVLANFSMATFMDPGVF). At 74-148 (PRADEDEDKE…NCIGRRNYRY (75 aa)) the chain is on the cytoplasmic side. The DHHC domain maps to 104–154 (KWCATCHFYRPPRCSHCSVCDNCVEDFDHHCPWVNNCIGRRNYRYFFLFLL). Cys134 (S-palmitoyl cysteine intermediate) is an active-site residue. The chain crosses the membrane as a helical span at residues 149 to 169 (FFLFLLSLSAHMVGVVAFGLV). Topologically, residues 170 to 190 (YVLNHAEGLGAAHTTITMAVM) are lumenal. Residues 191–211 (CVAGLFFIPVIGLTGFHVVLV) traverse the membrane as a helical segment. At 212 to 765 (TRGRTTNEHV…VGGTTYEISV (554 aa)) the chain is on the cytoplasmic side. The segment at 290-386 (LKAGLGRSKS…PGPDSLTLGE (97 aa)) is disordered. The span at 301-311 (GSLDRLDEKPL) shows a compositional bias: basic and acidic residues. Positions 333–348 (PRPSSAESALSAQRTS) are enriched in polar residues. Position 337 is a phosphoserine (Ser337). Residue Arg441 is modified to Omega-N-methylarginine. The tract at residues 447 to 542 (ALQPLRSEGG…PREPSPVRYD (96 aa)) is disordered. Phosphoserine occurs at positions 606 and 627. Positions 630–747 (SLSSAVSRAP…PGPSASPARH (118 aa)) are disordered. Positions 639–655 (PRTSSSSLQADLANNNA) are enriched in polar residues. Residues 671 to 680 (QGPPSPPSTP) show a composition bias toward pro residues. Residues Ser675, Ser682, Ser725, and Ser743 each carry the phosphoserine modification.

The protein belongs to the DHHC palmitoyltransferase family. ERF2/ZDHHC9 subfamily.

The protein localises to the golgi apparatus membrane. Its subcellular location is the mitochondrion membrane. The enzyme catalyses L-cysteinyl-[protein] + hexadecanoyl-CoA = S-hexadecanoyl-L-cysteinyl-[protein] + CoA. Functionally, palmitoyltransferase that catalyzes the addition of palmitate onto various protein substrates and therefore functions in several unrelated biological processes. Through the palmitoylation of ABCA1 regulates the localization of the transporter to the plasma membrane and thereby regulates its function in cholesterol and phospholipid efflux. Could also pamitoylate the D(2) dopamine receptor DRD2 and regulate its stability and localization to the plasma membrane. Could also play a role in glutamatergic transmission. The protein is Palmitoyltransferase ZDHHC8 of Canis lupus familiaris (Dog).